Consider the following 205-residue polypeptide: Arginine exporter protein ArgO (205 aa).

6 consecutive transmembrane segments (helical) span residues 1 to 21, 42 to 62, 67 to 87, 111 to 131, 147 to 167, and 182 to 202; these read MLAV…PLGP, LCAL…SALL, LLLA…GWGA, IIVT…DTFV, WFAF…ALLA, and VINL…ARQG.

It belongs to the LysE/ArgO transporter (TC 2.A.75) family.

The protein localises to the cell inner membrane. The catalysed reaction is L-arginine(in) = L-arginine(out). Its function is as follows. Involved in the export of arginine. Important to control the intracellular level of arginine and the correct balance between arginine and lysine. The sequence is that of Arginine exporter protein ArgO from Yersinia enterocolitica serotype O:8 / biotype 1B (strain NCTC 13174 / 8081).